The following is a 455-amino-acid chain: Peroxisomal membrane protein PEX3 (455 aa).

Residues 113–125 (TVLSDDFSTSQEG) are compositionally biased toward polar residues. The segment at 113–135 (TVLSDDFSTSQEGAISEDTNKPP) is disordered. The chain crosses the membrane as a helical span at residues 155–171 (FLTLIYCESLLIVFLHL).

It belongs to the peroxin-3 family. In terms of assembly, component of the peroxisomal docking complex, composed of at least PEX3, PEX13, PEX14 and PEX17. Component of the peroxisomal translocation complex, composed of at least PEX3, PEX2, PEX10 and PEX12. Interacts with PEX19. Interacts with the pexophagy receptor ATG30.

The protein localises to the peroxisome membrane. Functionally, peroxisomal membrane protein required for peroxisome biosynthesis. Shared component of both the peroxisomal docking complex and the peroxisomal translocation complex. The two types of peroxisomal matrix targeting signals, PTS1 and PTS2, are first recognized in the cytosol by their receptors PEX5 and PEX7, respectively, which then carry the cargo to the peroxisomal membrane. The peroxisomal targeting signal (PTS) receptor-cargo complexes interact with peroxisomal membrane protein (PMP) components of the docking complex. They have then additional downstream interactions with the translocation complex, leading to the transport of fully folded and oligomerized cargo into the peroxisome matrix. PEX3 acts as an anchoring site for PEX19 on the peroxisomal membrane and thus plays a crucial role in the assembly of the peroxisomal translocation complex. Is also essential for the interaction between the two complexes. Finally. PEX3 activates selective autophagy of peroxisomes (pexophagy) via interaction with the pexophagy receptor ATG30. This Komagataella pastoris (Yeast) protein is Peroxisomal membrane protein PEX3.